A 312-amino-acid chain; its full sequence is tRNA uridine(34) hydroxylase (312 aa).

The 95-residue stretch at 123 to 217 (SDPEVLLIDT…YLEEVPQEQS (95 aa)) folds into the Rhodanese domain. Residue cysteine 177 is the Cysteine persulfide intermediate of the active site. Positions 282–293 (ARERQKQIELAR) are enriched in basic and acidic residues. Residues 282-312 (ARERQKQIELARQRNQPHPLGRDPRQSTLEN) form a disordered region.

This sequence belongs to the TrhO family.

The enzyme catalyses uridine(34) in tRNA + AH2 + O2 = 5-hydroxyuridine(34) in tRNA + A + H2O. In terms of biological role, catalyzes oxygen-dependent 5-hydroxyuridine (ho5U) modification at position 34 in tRNAs. This chain is tRNA uridine(34) hydroxylase, found in Pseudomonas aeruginosa (strain UCBPP-PA14).